A 564-amino-acid polypeptide reads, in one-letter code: Arginine--tRNA ligase (564 aa).

The short motif at 136–146 is the 'HIGH' region element; it reads ANPTGPLHMGN.

The protein belongs to the class-I aminoacyl-tRNA synthetase family. Monomer.

It is found in the cytoplasm. It carries out the reaction tRNA(Arg) + L-arginine + ATP = L-arginyl-tRNA(Arg) + AMP + diphosphate. This Acetivibrio thermocellus (strain ATCC 27405 / DSM 1237 / JCM 9322 / NBRC 103400 / NCIMB 10682 / NRRL B-4536 / VPI 7372) (Clostridium thermocellum) protein is Arginine--tRNA ligase.